The following is a 577-amino-acid chain: E3 ubiquitin-protein ligase MSL2 (577 aa).

The sufficient for interaction with MSL1 stretch occupies residues 1 to 116; sequence MNPVNATALY…CEYITQTTLA (116 aa). Zn(2+) is bound by residues Cys-44, Cys-47, Cys-62, His-64, Cys-67, Cys-70, Cys-81, and Cys-84. The segment at 44–85 adopts an RING-type zinc-finger fold; sequence CCVCGHLLQDPIAPTNSTCQHYVCKTCKGKKMMMKPSCSWCK. Residue Lys-375 forms a Glycyl lysine isopeptide (Lys-Gly) (interchain with G-Cter in SUMO2) linkage. The interval 405 to 428 is disordered; sequence TKSMKKSHEHGSKKSHSKSKPGIL. The span at 407 to 423 shows a compositional bias: basic residues; it reads SMKKSHEHGSKKSHSKS. Phosphoserine is present on Ser-447. The region spanning 457-508 is the CXC MSL2-type domain; sequence QEKKGCKCGRATQNPSVLTCRGQRCPCYSNRKACLDCICRGCQNSYMANGEK. Zn(2+) is bound by residues Cys-462, Cys-464, Cys-476, Cys-481, Cys-483, Cys-490, Cys-493, Cys-495, and Cys-498.

This sequence belongs to the MSL2 family. As to quaternary structure, component of a multisubunit histone acetyltransferase complex (MSL) at least composed of the KAT8/MOF/MYST1, MSL1/hampin, MSL2 and MSL3. Forms a MSL heterotetrameric core with MSL1.

The protein localises to the nucleus. It is found in the chromosome. The catalysed reaction is S-ubiquitinyl-[E2 ubiquitin-conjugating enzyme]-L-cysteine + [acceptor protein]-L-lysine = [E2 ubiquitin-conjugating enzyme]-L-cysteine + N(6)-ubiquitinyl-[acceptor protein]-L-lysine.. It participates in protein modification; protein ubiquitination. Its function is as follows. Non-catalytic component of the MSL histone acetyltransferase complex, a multiprotein complex that mediates the majority of histone H4 acetylation at 'Lys-16' (H4K16ac), an epigenetic mark that prevents chromatin compaction. The MSL complex is required for chromosome stability and genome integrity by maintaining homeostatic levels of H4K16ac. The MSL complex is also involved in gene dosage by promoting up-regulation of genes expressed by the X chromosome. X up-regulation is required to compensate for autosomal biallelic expression. The MSL complex also participates in gene dosage compensation by promoting expression of Tsix non-coding RNA. MSL2 plays a key role in gene dosage by ensuring biallelic expression of a subset of dosage-sensitive genes, including many haploinsufficient genes. Acts by promoting promoter-enhancer contacts, thereby preventing DNA methylation of one allele and creating a methylation-free environment for methylation-sensitive transcription factors such as SP1, KANSL1 and KANSL3. Also acts as an E3 ubiquitin ligase that promotes monoubiquitination of histone H2B at 'Lys-35' (H2BK34Ub), but not that of H2A. This activity is greatly enhanced by heterodimerization with MSL1. H2B ubiquitination in turn stimulates histone H3 methylation at 'Lys-4' (H3K4me) and 'Lys-79' (H3K79me) and leads to gene activation, including that of HOXA9 and MEIS1. The chain is E3 ubiquitin-protein ligase MSL2 from Mus musculus (Mouse).